A 360-amino-acid chain; its full sequence is ACT1-like protein (360 aa).

The disordered stretch occupies residues 339 to 360; it reads KKQSHNNANDHHEDSMNYSITQ.

In terms of assembly, interacts with the receptor complex composed of ilcr-1 and ilcr-2. Also interacts with pik-1. Expressed in neurons.

Functionally, may act as an adapter to facilitate downstream signaling for the receptor complex composed of ilcr-1 and ilcr-2, which is a signaling complex that modulates neuronal activity and animal behavior in response to sensory neuron input. This is ACT1-like protein from Caenorhabditis elegans.